Here is a 426-residue protein sequence, read N- to C-terminus: High affinity 3',5'-cyclic-AMP phosphodiesterase 7A (426 aa).

Positions 80-402 (LDEDYNGQAK…ASWKGLQRQQ (323 aa)) constitute a PDEase domain. The active-site Proton donor is the His-156. The a divalent metal cation site is built by His-160, His-196, Asp-197, and Asp-306.

It belongs to the cyclic nucleotide phosphodiesterase family. PDE7 subfamily. In terms of assembly, interacts with CBFA2T3. The cofactor is a divalent metal cation.

Its subcellular location is the cytoplasm. The protein localises to the cytosol. It catalyses the reaction 3',5'-cyclic AMP + H2O = AMP + H(+). It participates in purine metabolism; 3',5'-cyclic AMP degradation; AMP from 3',5'-cyclic AMP: step 1/1. Its function is as follows. Hydrolyzes the second messenger cAMP, which is a key regulator of many important physiological processes. May have a role in muscle signal transduction. In Rattus norvegicus (Rat), this protein is High affinity 3',5'-cyclic-AMP phosphodiesterase 7A (Pde7a).